Reading from the N-terminus, the 225-residue chain is Protein-L-isoaspartate O-methyltransferase (225 aa).

S75 is a catalytic residue.

The protein belongs to the methyltransferase superfamily. L-isoaspartyl/D-aspartyl protein methyltransferase family.

Its subcellular location is the cytoplasm. It catalyses the reaction [protein]-L-isoaspartate + S-adenosyl-L-methionine = [protein]-L-isoaspartate alpha-methyl ester + S-adenosyl-L-homocysteine. Functionally, catalyzes the methyl esterification of L-isoaspartyl residues in peptides and proteins that result from spontaneous decomposition of normal L-aspartyl and L-asparaginyl residues. It plays a role in the repair and/or degradation of damaged proteins. In Stenotrophomonas maltophilia (strain K279a), this protein is Protein-L-isoaspartate O-methyltransferase.